The chain runs to 121 residues: Griffithsin (121 aa).

In terms of domain architecture, Jacalin-type lectin spans 1 to 120 (SLTHRKFGGS…LDSLDIYYEQ (120 aa)).

Functionally, mixed specificity lectin with anti-HIV activity. Binds to HIV envelope glycoproteins, including exterior membrane glycoprotein gp120, and inhibits viral entry into cells. Binding to gp120 is dependent on gp120 being glycosylated, and is inhibited by mannose, glucose and N-acetylglucosamine. This is Griffithsin from Griffithsia sp. (strain Q66D336) (Red alga).